We begin with the raw amino-acid sequence, 905 residues long: Protein translocase subunit SecA (905 aa).

ATP is bound by residues Q87, 105–109, and D512; that span reads GEGKT. The interval 836-905 is disordered; sequence DVDAVDEQRK…KKYKHCHGKL (70 aa). The segment covering 841 to 858 has biased composition (basic and acidic residues); that stretch reads DEQRKAADSAPREFRHEQ. Residues C890, C892, C901, and H902 each coordinate Zn(2+). Over residues 896–905 the composition is skewed to basic residues; sequence KKYKHCHGKL.

Belongs to the SecA family. Monomer and homodimer. Part of the essential Sec protein translocation apparatus which comprises SecA, SecYEG and auxiliary proteins SecDF-YajC and YidC. Zn(2+) serves as cofactor.

The protein resides in the cell inner membrane. The protein localises to the cytoplasm. It catalyses the reaction ATP + H2O + cellular proteinSide 1 = ADP + phosphate + cellular proteinSide 2.. In terms of biological role, part of the Sec protein translocase complex. Interacts with the SecYEG preprotein conducting channel. Has a central role in coupling the hydrolysis of ATP to the transfer of proteins into and across the cell membrane, serving both as a receptor for the preprotein-SecB complex and as an ATP-driven molecular motor driving the stepwise translocation of polypeptide chains across the membrane. The chain is Protein translocase subunit SecA from Idiomarina loihiensis (strain ATCC BAA-735 / DSM 15497 / L2-TR).